We begin with the raw amino-acid sequence, 367 residues long: MKTSHLIRIALPGALAAALLASQVSQAADLVPPPGYYAAVGERKGSAGSCPAVPPPYTGSLVFTSKYEGSDSARATLNVKAEKTFRSQIKDITDMERGATKLVTQYMRSGRDGDLACALNWMSAWARAGALQSDDFNHTGKSMRKWALGSLSGAYMRLKFSSSRPLAAHAEQSREIEDWFARLGTQVVRDWSGLPLKKINNHSYWAAWSVMSTAVVTNRRDLFDWAVSEFKVAANQVDEQGFLPNELKRRQRALAYHNYALPPLAMIAAFAQVNGVDLRQENHGALQRLAERVMKGVDDEETFEEKTGEDQDMTDLKVDNKYAWLEPYCALYRCEPKMLEAKKDREPFNSFRLGGEVTRVFSREGGS.

Positions 1–27 (MKTSHLIRIALPGALAAALLASQVSQA) are cleaved as a signal peptide. Substrate contacts are provided by residues 65-66 (SK), 138-139 (HT), and Tyr256.

This sequence belongs to the polysaccharide lyase 5 family.

It is found in the periplasm. It carries out the reaction Eliminative cleavage of alginate to give oligosaccharides with 4-deoxy-alpha-L-erythro-hex-4-enuronosyl groups at their non-reducing ends and beta-D-mannuronate at their reducing end.. In terms of biological role, catalyzes the depolymerization of alginate by cleaving the beta-1,4 glycosidic bond between two adjacent sugar residues via a beta-elimination mechanism. May serve to degrade mislocalized alginate that is trapped in the periplasmic space. Acts preferentially on non-acetylated alginate or its precursor mannuronan. Is able to catalyze cleavage adjacent to either mannuronate or guluronate residues in alginate. Exhaustive digestion of alginate by AlgL generates dimeric and trimeric products. In addition to its enzymatic function, AlgL appears to be required for alginate export, maybe as part of a multi-protein alginate-secretion complex. The sequence is that of Alginate lyase from Pseudomonas aeruginosa (strain ATCC 15692 / DSM 22644 / CIP 104116 / JCM 14847 / LMG 12228 / 1C / PRS 101 / PAO1).